The following is a 267-amino-acid chain: Aliphatic sulfonates import ATP-binding protein SsuB 1 (267 aa).

One can recognise an ABC transporter domain in the interval Val-35–Leu-249. Residue Gly-67 to Ser-74 participates in ATP binding.

Belongs to the ABC transporter superfamily. Aliphatic sulfonates importer (TC 3.A.1.17.2) family. The complex is composed of two ATP-binding proteins (SsuB), two transmembrane proteins (SsuC) and a solute-binding protein (SsuA).

The protein localises to the cell membrane. It carries out the reaction ATP + H2O + aliphatic sulfonate-[sulfonate-binding protein]Side 1 = ADP + phosphate + aliphatic sulfonateSide 2 + [sulfonate-binding protein]Side 1.. In terms of biological role, part of the ABC transporter complex SsuABC involved in aliphatic sulfonates import. Responsible for energy coupling to the transport system. The sequence is that of Aliphatic sulfonates import ATP-binding protein SsuB 1 from Frankia alni (strain DSM 45986 / CECT 9034 / ACN14a).